The following is a 296-amino-acid chain: Acetylglutamate kinase (296 aa).

Substrate is bound by residues 69-70 (GG), R91, and N192.

This sequence belongs to the acetylglutamate kinase family. ArgB subfamily.

It localises to the cytoplasm. It catalyses the reaction N-acetyl-L-glutamate + ATP = N-acetyl-L-glutamyl 5-phosphate + ADP. It participates in amino-acid biosynthesis; L-arginine biosynthesis; N(2)-acetyl-L-ornithine from L-glutamate: step 2/4. In terms of biological role, catalyzes the ATP-dependent phosphorylation of N-acetyl-L-glutamate. In Ruthia magnifica subsp. Calyptogena magnifica, this protein is Acetylglutamate kinase.